The sequence spans 63 residues: Large ribosomal subunit protein uL29 (63 aa).

The protein belongs to the universal ribosomal protein uL29 family.

The polypeptide is Large ribosomal subunit protein uL29 (Photobacterium profundum (strain SS9)).